A 293-amino-acid chain; its full sequence is Diaminopimelate epimerase (293 aa).

Residues asparagine 13, glutamine 46, and asparagine 66 each contribute to the substrate site. The active-site Proton donor is the cysteine 75. Residues 76-77 (GN), asparagine 162, asparagine 195, and 213-214 (ER) contribute to the substrate site. Cysteine 222 serves as the catalytic Proton acceptor. Residue 223 to 224 (GT) coordinates substrate.

It belongs to the diaminopimelate epimerase family. Homodimer.

Its subcellular location is the cytoplasm. The enzyme catalyses (2S,6S)-2,6-diaminopimelate = meso-2,6-diaminopimelate. Its pathway is amino-acid biosynthesis; L-lysine biosynthesis via DAP pathway; DL-2,6-diaminopimelate from LL-2,6-diaminopimelate: step 1/1. Functionally, catalyzes the stereoinversion of LL-2,6-diaminopimelate (L,L-DAP) to meso-diaminopimelate (meso-DAP), a precursor of L-lysine and an essential component of the bacterial peptidoglycan. The chain is Diaminopimelate epimerase from Psychrobacter sp. (strain PRwf-1).